The primary structure comprises 20 residues: Pregnancy-associated glycoprotein 67A (20 aa).

Asparagine 4 and asparagine 20 each carry an N-linked (GlcNAc...) asparagine glycan.

Belongs to the peptidase A1 family. As to expression, chorionic epithelium (trophectoderm) and placental cotyledons.

It localises to the secreted. It is found in the extracellular space. This is Pregnancy-associated glycoprotein 67A from Bison bonasus (European bison).